The primary structure comprises 630 residues: 1-deoxy-D-xylulose-5-phosphate synthase (630 aa).

Residues histidine 72 and 113-115 (GHS) contribute to the thiamine diphosphate site. Mg(2+) is bound at residue aspartate 144. Thiamine diphosphate contacts are provided by residues 145-146 (GA), asparagine 173, tyrosine 284, and glutamate 367. Asparagine 173 is a Mg(2+) binding site.

It belongs to the transketolase family. DXPS subfamily. Homodimer. The cofactor is Mg(2+). Thiamine diphosphate is required as a cofactor.

It carries out the reaction D-glyceraldehyde 3-phosphate + pyruvate + H(+) = 1-deoxy-D-xylulose 5-phosphate + CO2. It participates in metabolic intermediate biosynthesis; 1-deoxy-D-xylulose 5-phosphate biosynthesis; 1-deoxy-D-xylulose 5-phosphate from D-glyceraldehyde 3-phosphate and pyruvate: step 1/1. Functionally, catalyzes the acyloin condensation reaction between C atoms 2 and 3 of pyruvate and glyceraldehyde 3-phosphate to yield 1-deoxy-D-xylulose-5-phosphate (DXP). This is 1-deoxy-D-xylulose-5-phosphate synthase from Bacillus mycoides (strain KBAB4) (Bacillus weihenstephanensis).